Here is a 289-residue protein sequence, read N- to C-terminus: 3-hydroxy-16-methoxy-2,3-dihydrotabersonine N-methyltransferase (289 aa).

Positions 71–80 (MLDVGSGLGG) are SAM motif I. The segment at 134-142 (GKFDVVFTI) is SAM motif II. The segment at 161–170 (VAAPGAAIII) is SAM motif III. The Microbody targeting signal signature appears at 287–289 (KSI).

This sequence belongs to the class I-like SAM-binding methyltransferase superfamily. gTMT family. In terms of assembly, homodimer. In terms of tissue distribution, mainly expressed in young leaves, and, to a lower extent, in mature leaves, flowers, stems and roots (at protein level).

The protein localises to the thylakoid. It is found in the peroxisome. The catalysed reaction is (3R)-3-hydroxy-16-methoxy-2,3-dihydrotabersonine + S-adenosyl-L-methionine = deacetoxyvindoline + S-adenosyl-L-homocysteine + H(+). Its pathway is alkaloid biosynthesis; vindoline biosynthesis. With respect to regulation, inhibited by gamma-tocopherol. In terms of biological role, S-adenosyl-L-methionine-dependent N-methyltransferase that catalyzes a nitrogen methylation involved in vindoline biosynthesis. Displays a strict requirement for a 2,3-dihydro bond in the aspidosperma skeleton. Can use 2,3-dihydrotabersonine, 2,3-dihydro-3-hydroxytabersonine and 2,3,6,7-tetraydro-3-hydroxytabersonine as substrates, but not tabersonine, vincadifformine, 21-hydroxycyclolochnericine, tryptamine, norharmane, harmaline, catharanthine, norajmaline, ajmaline, serpentine, ajmalicine, yohimbine or gamma-tocopherol. Inactive with picrinine as substrate. This Catharanthus roseus (Madagascar periwinkle) protein is 3-hydroxy-16-methoxy-2,3-dihydrotabersonine N-methyltransferase.